The sequence spans 376 residues: MATSHLLAAASSTAASSATFRPPLLSLRSPPPSSLRLNRRRHFQVVRAAETDKETKANAPEKAPAGGSSFNQLLGIKGAKQENDIWKIRLQLTKPVTWPPLVWGVLCGAAASGNFHWTVEDVAKSIVCMIMSGPCLTGYTQTINDWYDRDIDAINEPYRPIPSGAISENEVITQIWALLLAGLGLGALLDVWAGHDFPIIFYLAVGGSLLSYIYSAPPLKLKQNGWIGNFALGASYIGLPWWAGQALFGTLTPDIVVLTSLYSIAGLGIAIVNDFKSVEGDRALGLQSLPVAFGMETAKWICVGAIDITQLSVAGYLFSSGKPYYALALLGLTIPQVVFQFQYFLKDPVKYDVKYQASAQPFFVLGLLVTALATSH.

The transit peptide at 1-47 (MATSHLLAAASSTAASSATFRPPLLSLRSPPPSSLRLNRRRHFQVVR) directs the protein to the chloroplast. A disordered region spans residues 48-69 (AAETDKETKANAPEKAPAGGSS). 8 helical membrane passes run 95 to 115 (PVTWPPLVWGVLCGAAASGNF), 171 to 191 (VITQIWALLLAGLGLGALLDV), 197 to 217 (FPIIFYLAVGGSLLSYIYSAP), 230 to 250 (FALGASYIGLPWWAGQALFGT), 255 to 275 (IVVLTSLYSIAGLGIAIVNDF), 300 to 320 (WICVGAIDITQLSVAGYLFSS), 325 to 345 (YALALLGLTIPQVVFQFQYFL), and 355 to 375 (YQASAQPFFVLGLLVTALATS).

Belongs to the UbiA prenyltransferase family. Chlorophyll synthase subfamily.

The protein resides in the plastid. It localises to the chloroplast membrane. The enzyme catalyses phytyl diphosphate + chlorophyllide a + H(+) = chlorophyll a + diphosphate. Functionally, involved in one of the last steps of the biosynthesis of chlorophyll a. The chain is Chlorophyll synthase, chloroplastic (CHLG) from Oryza sativa subsp. japonica (Rice).